The primary structure comprises 585 residues: A-type ATP synthase subunit A (585 aa).

231–238 (GPFGSGKT) is a binding site for ATP.

The protein belongs to the ATPase alpha/beta chains family. In terms of assembly, has multiple subunits with at least A(3), B(3), C, D, E, F, H, I and proteolipid K(x).

It is found in the cell membrane. It carries out the reaction ATP + H2O + 4 H(+)(in) = ADP + phosphate + 5 H(+)(out). Its function is as follows. Component of the A-type ATP synthase that produces ATP from ADP in the presence of a proton gradient across the membrane. The A chain is the catalytic subunit. This chain is A-type ATP synthase subunit A, found in Desulfurococcus sp. (strain SY).